Reading from the N-terminus, the 266-residue chain is MSDILKKICDVKVEEVAAAQKRVSFTDMRRDAESRVLTRDFVGALRAKIDQGQAGVIAEIKKASPSKGVIREDFIPADIAQSYAEGDGKVGAACLSVLTDRQFFQGQPDYLKQARASCPLPVLRKDFMIDPYQIYESRAFGADCVLLIAACLEDGLMAEMEQIARSLDMAVLVEVHDGAELERALRLQTPLVGINNRNLRTFEVSLQTTLDLKKEVPADRLLVAESGILAPVDVHTLRDAGVNAFLVGEAFMRAPDPGRALAQLFA.

It belongs to the TrpC family.

It catalyses the reaction 1-(2-carboxyphenylamino)-1-deoxy-D-ribulose 5-phosphate + H(+) = (1S,2R)-1-C-(indol-3-yl)glycerol 3-phosphate + CO2 + H2O. Its pathway is amino-acid biosynthesis; L-tryptophan biosynthesis; L-tryptophan from chorismate: step 4/5. The protein is Indole-3-glycerol phosphate synthase of Acidovorax sp. (strain JS42).